A 663-amino-acid chain; its full sequence is UvrABC system protein B (663 aa).

Residues Asp31–Arg418 form the Helicase ATP-binding domain. Gly44 to Thr51 lines the ATP pocket. Residues Tyr97–Val120 carry the Beta-hairpin motif. In terms of domain architecture, Helicase C-terminal spans Gln435–Ile601. Residues Gln627 to Ile662 enclose the UVR domain.

Belongs to the UvrB family. As to quaternary structure, forms a heterotetramer with UvrA during the search for lesions. Interacts with UvrC in an incision complex.

Its subcellular location is the cytoplasm. The UvrABC repair system catalyzes the recognition and processing of DNA lesions. A damage recognition complex composed of 2 UvrA and 2 UvrB subunits scans DNA for abnormalities. Upon binding of the UvrA(2)B(2) complex to a putative damaged site, the DNA wraps around one UvrB monomer. DNA wrap is dependent on ATP binding by UvrB and probably causes local melting of the DNA helix, facilitating insertion of UvrB beta-hairpin between the DNA strands. Then UvrB probes one DNA strand for the presence of a lesion. If a lesion is found the UvrA subunits dissociate and the UvrB-DNA preincision complex is formed. This complex is subsequently bound by UvrC and the second UvrB is released. If no lesion is found, the DNA wraps around the other UvrB subunit that will check the other stand for damage. The chain is UvrABC system protein B from Streptococcus agalactiae serotype Ia (strain ATCC 27591 / A909 / CDC SS700).